The primary structure comprises 132 residues: Small ribosomal subunit protein uS19 (132 aa).

It belongs to the universal ribosomal protein uS19 family. In terms of assembly, part of the 30S ribosomal subunit.

In terms of biological role, protein S19 forms a complex with S13 that binds strongly to the 16S ribosomal RNA. The polypeptide is Small ribosomal subunit protein uS19 (Pyrococcus furiosus (strain ATCC 43587 / DSM 3638 / JCM 8422 / Vc1)).